The chain runs to 158 residues: Transcriptional repressor NrdR (158 aa).

A zinc finger lies at 3–34; the sequence is CPFCNSEETRVIDTRLTDDGHVVRRRRECEHC. Residues 49–139 form the ATP-cone domain; the sequence is IFVVKKGGQR…VYKEFRDLDH (91 aa).

Belongs to the NrdR family. Zn(2+) is required as a cofactor.

Functionally, negatively regulates transcription of bacterial ribonucleotide reductase nrd genes and operons by binding to NrdR-boxes. This chain is Transcriptional repressor NrdR, found in Kosmotoga olearia (strain ATCC BAA-1733 / DSM 21960 / TBF 19.5.1).